Here is a 329-residue protein sequence, read N- to C-terminus: Beta-ketoacyl-[acyl-carrier-protein] synthase III (329 aa).

Residues cysteine 123 and histidine 256 contribute to the active site. Residues 257–261 (QANIR) are ACP-binding. The active site involves asparagine 286.

The protein belongs to the thiolase-like superfamily. FabH family. As to quaternary structure, homodimer.

It localises to the cytoplasm. It catalyses the reaction malonyl-[ACP] + acetyl-CoA + H(+) = 3-oxobutanoyl-[ACP] + CO2 + CoA. It participates in lipid metabolism; fatty acid biosynthesis. Its function is as follows. Catalyzes the condensation reaction of fatty acid synthesis by the addition to an acyl acceptor of two carbons from malonyl-ACP. Catalyzes the first condensation reaction which initiates fatty acid synthesis and may therefore play a role in governing the total rate of fatty acid production. Possesses both acetoacetyl-ACP synthase and acetyl transacylase activities. Its substrate specificity determines the biosynthesis of branched-chain and/or straight-chain of fatty acids. In Burkholderia mallei (strain NCTC 10247), this protein is Beta-ketoacyl-[acyl-carrier-protein] synthase III.